A 243-amino-acid chain; its full sequence is Large ribosomal subunit protein uL2 (243 aa).

The interval 198–243 is disordered; that stretch reads VDHPFGGGGRQHPGKPKSVSRDTPPGRKVGDIASKRTGRGGKGGQE. Residues 221–231 show a composition bias toward basic and acidic residues; sequence PPGRKVGDIAS.

This sequence belongs to the universal ribosomal protein uL2 family. Part of the 50S ribosomal subunit. Forms a bridge to the 30S subunit in the 70S ribosome.

In terms of biological role, one of the primary rRNA binding proteins. Required for association of the 30S and 50S subunits to form the 70S ribosome, for tRNA binding and peptide bond formation. It has been suggested to have peptidyltransferase activity; this is somewhat controversial. Makes several contacts with the 16S rRNA in the 70S ribosome. The polypeptide is Large ribosomal subunit protein uL2 (Natronomonas pharaonis (strain ATCC 35678 / DSM 2160 / CIP 103997 / JCM 8858 / NBRC 14720 / NCIMB 2260 / Gabara) (Halobacterium pharaonis)).